A 445-amino-acid chain; its full sequence is CBL-interacting protein kinase 3 (445 aa).

The Protein kinase domain maps to Tyr-19 to Phe-274. ATP contacts are provided by residues Ile-25 to Val-33 and Lys-48. Asp-142 acts as the Proton acceptor in catalysis. Residues Asp-160 to Glu-189 are activation loop. Residues Ala-309–Glu-336 enclose the NAF domain. Residues Lys-342–Ile-371 are PPI.

Belongs to the protein kinase superfamily. CAMK Ser/Thr protein kinase family. SNF1 subfamily. Mn(2+) serves as cofactor.

It carries out the reaction L-seryl-[protein] + ATP = O-phospho-L-seryl-[protein] + ADP + H(+). The enzyme catalyses L-threonyl-[protein] + ATP = O-phospho-L-threonyl-[protein] + ADP + H(+). CIPK serine-threonine protein kinases interact with CBL proteins. Binding of a CBL protein to the regulatory NAF domain of CIPK protein lead to the activation of the kinase in a calcium-dependent manner. This Oryza sativa subsp. japonica (Rice) protein is CBL-interacting protein kinase 3 (CIPK3).